The following is a 414-amino-acid chain: Tryptophan synthase beta chain (414 aa).

Residues 1–26 (MVSTFSRKDQNYKNDDLNQPSKEGRF) are compositionally biased toward basic and acidic residues. Residues 1–27 (MVSTFSRKDQNYKNDDLNQPSKEGRFG) form a disordered region. Lysine 109 bears the N6-(pyridoxal phosphate)lysine mark.

Belongs to the TrpB family. In terms of assembly, tetramer of two alpha and two beta chains. Pyridoxal 5'-phosphate serves as cofactor.

The catalysed reaction is (1S,2R)-1-C-(indol-3-yl)glycerol 3-phosphate + L-serine = D-glyceraldehyde 3-phosphate + L-tryptophan + H2O. It participates in amino-acid biosynthesis; L-tryptophan biosynthesis; L-tryptophan from chorismate: step 5/5. Its function is as follows. The beta subunit is responsible for the synthesis of L-tryptophan from indole and L-serine. The chain is Tryptophan synthase beta chain from Prochlorococcus marinus (strain MIT 9301).